The sequence spans 437 residues: Enolase (437 aa).

Gln163 contributes to the (2R)-2-phosphoglycerate binding site. Glu205 acts as the Proton donor in catalysis. Mg(2+) is bound by residues Asp242, Glu285, and Asp312. Residues Lys337, Arg366, Ser367, and Lys388 each contribute to the (2R)-2-phosphoglycerate site. Lys337 functions as the Proton acceptor in the catalytic mechanism.

This sequence belongs to the enolase family. It depends on Mg(2+) as a cofactor.

The protein localises to the cytoplasm. It is found in the secreted. The protein resides in the cell surface. It catalyses the reaction (2R)-2-phosphoglycerate = phosphoenolpyruvate + H2O. It functions in the pathway carbohydrate degradation; glycolysis; pyruvate from D-glyceraldehyde 3-phosphate: step 4/5. In terms of biological role, catalyzes the reversible conversion of 2-phosphoglycerate (2-PG) into phosphoenolpyruvate (PEP). It is essential for the degradation of carbohydrates via glycolysis. The sequence is that of Enolase from Nitratidesulfovibrio vulgaris (strain DP4) (Desulfovibrio vulgaris).